A 705-amino-acid polypeptide reads, in one-letter code: Fatty acid oxidation complex subunit alpha (705 aa).

The tract at residues Met1–Pro188 is enoyl-CoA hydratase. Residues Arg308–Phe705 form a 3-hydroxyacyl-CoA dehydrogenase region.

In the N-terminal section; belongs to the enoyl-CoA hydratase/isomerase family. It in the central section; belongs to the 3-hydroxyacyl-CoA dehydrogenase family. Heterotetramer of two alpha chains (FadJ) and two beta chains (FadI).

The protein localises to the cytoplasm. It catalyses the reaction a (3S)-3-hydroxyacyl-CoA = a (2E)-enoyl-CoA + H2O. The catalysed reaction is a 4-saturated-(3S)-3-hydroxyacyl-CoA = a (3E)-enoyl-CoA + H2O. It carries out the reaction a (3S)-3-hydroxyacyl-CoA + NAD(+) = a 3-oxoacyl-CoA + NADH + H(+). The enzyme catalyses (3S)-3-hydroxybutanoyl-CoA = (3R)-3-hydroxybutanoyl-CoA. Its pathway is lipid metabolism; fatty acid beta-oxidation. Its function is as follows. Catalyzes the formation of a hydroxyacyl-CoA by addition of water on enoyl-CoA. Also exhibits 3-hydroxyacyl-CoA epimerase and 3-hydroxyacyl-CoA dehydrogenase activities. This Shewanella oneidensis (strain ATCC 700550 / JCM 31522 / CIP 106686 / LMG 19005 / NCIMB 14063 / MR-1) protein is Fatty acid oxidation complex subunit alpha.